Reading from the N-terminus, the 676-residue chain is Head-specific guanylate cyclase (676 aa).

Positions 466-593 (TILFSDIVGF…HSVTIANKFE (128 aa)) constitute a Guanylate cyclase domain.

The protein belongs to the adenylyl cyclase class-4/guanylyl cyclase family. As to quaternary structure, heterodimer. As to expression, head, where it is preferentially expressed in the CNS and the retina. Not found in bodies.

It localises to the cytoplasm. The catalysed reaction is GTP = 3',5'-cyclic GMP + diphosphate. Functionally, may have a role in phototransduction. Catalyzes the conversion of GTP to cGMP, a common second messenger that is utilized in a wide variety of cells and signal transduction pathways. A second subunit is required for enzyme activity. The chain is Head-specific guanylate cyclase (Gycalpha99B) from Drosophila melanogaster (Fruit fly).